The chain runs to 154 residues: Pro-corazonin (154 aa).

The first 19 residues, 1-19 (MLRLLLLPLFLFTLSMCMG), serve as a signal peptide directing secretion. Glutamine 20 bears the Pyrrolidone carboxylic acid mark. Asparagine amide is present on asparagine 30. The propeptide occupies 70 to 154 (LERCLSQLQR…SAEPNVFGKH (85 aa)).

This sequence belongs to the corazonin family. Expression is restricted to 24 neurons in the larval CNS (8 in the brain and 16 in the ventral nerve cord) and 12-16 neurons in the pars lateralis of the adult brain.

It is found in the secreted. Its function is as follows. Cardioactive peptide. Corazonin is probably involved in the physiological regulation of the heart beat. Clock (Clk) and cycle (cyc) proteins negatively regulate Crz transcription in a cell-specific manner. The protein is Pro-corazonin (Crz) of Drosophila erecta (Fruit fly).